Reading from the N-terminus, the 146-residue chain is Large ribosomal subunit protein uL15 (146 aa).

Positions methionine 1 to arginine 13 are enriched in basic and acidic residues. The interval methionine 1–glutamine 54 is disordered. Over residues threonine 23–glutamine 35 the composition is skewed to gly residues.

The protein belongs to the universal ribosomal protein uL15 family. As to quaternary structure, part of the 50S ribosomal subunit.

In terms of biological role, binds to the 23S rRNA. This Lactobacillus johnsonii (strain CNCM I-12250 / La1 / NCC 533) protein is Large ribosomal subunit protein uL15.